Consider the following 1322-residue polypeptide: Putative DNA ligase 4 (1322 aa).

The ATP site is built by E265, K267, R272, R287, E317, F387, E497, K502, R513, K519, and K521. Residue K267 is the N6-AMP-lysine intermediate of the active site. E317 is a binding site for Mg(2+). A Mg(2+)-binding site is contributed by E497. BRCT domains lie at 686–768 and 825–935; these read LDVQ…PKFD and ERFC…TYSL. Disordered regions lie at residues 945–1212 and 1245–1310; these read IERS…SATC and AEAK…KKVS. The segment covering 957 to 969 has biased composition (basic and acidic residues); that stretch reads DKLEENEKADTSH. 2 stretches are compositionally biased toward basic residues: residues 970–979 and 994–1005; these read VKHAPRKRGR and PVRRTRARRGNQ. Basic and acidic residues-rich tracts occupy residues 1007 to 1022 and 1033 to 1047; these read AKIDDVEPEESDHGET and NISKMEVDSFDKDQV. The segment covering 1051–1063 has biased composition (basic residues); the sequence is PVRRTRARRGKQH. Basic and acidic residues-rich tracts occupy residues 1082-1104, 1125-1161, and 1190-1204; these read DDQRLDADYISKMEEDSSDRDQG, AKIDRETGPGETGQDDKKLNADSISKMEEHAHDKDQE, and PKHERNQTVLRRDTA. A compositionally biased stretch (low complexity) spans 1261–1288; it reads SSYVAPVPQASASSASSSGVPAPHAGSS.

It belongs to the ATP-dependent DNA ligase family. Requires Mg(2+) as cofactor.

It is found in the nucleus. It catalyses the reaction ATP + (deoxyribonucleotide)n-3'-hydroxyl + 5'-phospho-(deoxyribonucleotide)m = (deoxyribonucleotide)n+m + AMP + diphosphate.. Its function is as follows. DNA ligase involved in DNA non-homologous end joining (NHEJ); required for double-strand break (DSB) repair. The polypeptide is Putative DNA ligase 4 (LIG4) (Oryza sativa subsp. japonica (Rice)).